Reading from the N-terminus, the 283-residue chain is F-box only protein 27 (283 aa).

Positions 1 to 23 (MGASVSRGRAARVPAPEPEPEEA) are disordered. Residues 23–70 (ALDLSQLPPELLLVVLSHVPPRTLLGRCRQVCRGWRALVDGQALWLLI) form the F-box domain. Residues 104-280 (FCARRPIGRN…VTNSSVIVRV (177 aa)) form the FBA domain.

As to quaternary structure, part of a SCF (SKP1-cullin-F-box) protein ligase complex. Interacts with SKP1 and CUL1. As to expression, predominantly expressed in brain, heart and kidney. Expressed at lower levels in liver and lung.

Its function is as follows. Substrate-recognition component of the SCF (SKP1-CUL1-F-box protein)-type E3 ubiquitin ligase complex. Able to recognize and bind denatured glycoproteins, which are modified with complex-type oligosaccharides. The polypeptide is F-box only protein 27 (FBXO27) (Homo sapiens (Human)).